Reading from the N-terminus, the 128-residue chain is Sulfurtransferase TusD (128 aa).

Catalysis depends on C78, which acts as the Cysteine persulfide intermediate.

It belongs to the DsrE/TusD family. As to quaternary structure, heterohexamer, formed by a dimer of trimers. The hexameric TusBCD complex contains 2 copies each of TusB, TusC and TusD. The TusBCD complex interacts with TusE.

It localises to the cytoplasm. Part of a sulfur-relay system required for 2-thiolation of 5-methylaminomethyl-2-thiouridine (mnm(5)s(2)U) at tRNA wobble positions. Accepts sulfur from TusA and transfers it in turn to TusE. This chain is Sulfurtransferase TusD, found in Escherichia fergusonii (strain ATCC 35469 / DSM 13698 / CCUG 18766 / IAM 14443 / JCM 21226 / LMG 7866 / NBRC 102419 / NCTC 12128 / CDC 0568-73).